The sequence spans 201 residues: Probable quinol oxidase subunit 3 (201 aa).

The next 5 helical transmembrane spans lie at 20–40 (LGFW…FATL), 62–82 (LILI…IAIY), 91–111 (LMMF…GFEI), 133–153 (FFIL…WVIC), and 172–192 (FIVS…FTAV).

This sequence belongs to the cytochrome c oxidase subunit 3 family.

It is found in the cell membrane. The enzyme catalyses 2 a quinol + O2 = 2 a quinone + 2 H2O. Its function is as follows. Catalyzes quinol oxidation with the concomitant reduction of oxygen to water. The polypeptide is Probable quinol oxidase subunit 3 (qoxC) (Staphylococcus epidermidis (strain ATCC 35984 / DSM 28319 / BCRC 17069 / CCUG 31568 / BM 3577 / RP62A)).